Consider the following 445-residue polypeptide: Argininosuccinate synthase (445 aa).

ATP is bound by residues 17–25 (AFSGGLDTS) and Ala43. Tyr99 serves as a coordination point for L-citrulline. ATP is bound by residues Gly129 and Thr131. The L-aspartate site is built by Thr131, Asn135, and Asp136. Asn135 lines the L-citrulline pocket. Position 136 (Asp136) interacts with ATP. 2 residues coordinate L-citrulline: Arg139 and Ser192. Asp194 serves as a coordination point for ATP. Residues Thr201, Glu203, and Glu280 each contribute to the L-citrulline site.

It belongs to the argininosuccinate synthase family. Type 2 subfamily. In terms of assembly, homotetramer.

It localises to the cytoplasm. The enzyme catalyses L-citrulline + L-aspartate + ATP = 2-(N(omega)-L-arginino)succinate + AMP + diphosphate + H(+). The protein operates within amino-acid biosynthesis; L-arginine biosynthesis; L-arginine from L-ornithine and carbamoyl phosphate: step 2/3. This Ralstonia nicotianae (strain ATCC BAA-1114 / GMI1000) (Ralstonia solanacearum) protein is Argininosuccinate synthase (argG).